Reading from the N-terminus, the 254-residue chain is MDEILERVRERVEEIRDRTFTPRAGGRSLRKALSGPGVSVIAEVKPTSPSQGRLRDVDAEDVAERARAYERGGAAGISVLTEPEFFDGRPEYVEVVREAVDVPVLRKDFIIDPVQVEESAHYGADAVLIIAAAVGREAPELIDLAHEHGMEVLLEIDRWEHLELLSECDPDVVGVNNRDLRTLEVDLNRTLELGPEVKDLTNAPLVAESGVSGPEDVVLLGEVADAVLVGTYLMRAPDPSEAVRKLVEAGRSTE.

It belongs to the TrpC family.

It carries out the reaction 1-(2-carboxyphenylamino)-1-deoxy-D-ribulose 5-phosphate + H(+) = (1S,2R)-1-C-(indol-3-yl)glycerol 3-phosphate + CO2 + H2O. It participates in amino-acid biosynthesis; L-tryptophan biosynthesis; L-tryptophan from chorismate: step 4/5. In Methanopyrus kandleri (strain AV19 / DSM 6324 / JCM 9639 / NBRC 100938), this protein is Indole-3-glycerol phosphate synthase.